The sequence spans 427 residues: Serine--tRNA ligase (427 aa).

Residue 231–233 (TAE) participates in L-serine binding. 262–264 (RSE) lines the ATP pocket. Glu285 contacts L-serine. Position 349-352 (349-352 (EISS)) interacts with ATP. Ser385 is an L-serine binding site.

Belongs to the class-II aminoacyl-tRNA synthetase family. Type-1 seryl-tRNA synthetase subfamily. As to quaternary structure, homodimer. The tRNA molecule binds across the dimer.

The protein resides in the cytoplasm. The catalysed reaction is tRNA(Ser) + L-serine + ATP = L-seryl-tRNA(Ser) + AMP + diphosphate + H(+). It carries out the reaction tRNA(Sec) + L-serine + ATP = L-seryl-tRNA(Sec) + AMP + diphosphate + H(+). Its pathway is aminoacyl-tRNA biosynthesis; selenocysteinyl-tRNA(Sec) biosynthesis; L-seryl-tRNA(Sec) from L-serine and tRNA(Sec): step 1/1. In terms of biological role, catalyzes the attachment of serine to tRNA(Ser). Is also able to aminoacylate tRNA(Sec) with serine, to form the misacylated tRNA L-seryl-tRNA(Sec), which will be further converted into selenocysteinyl-tRNA(Sec). The chain is Serine--tRNA ligase from Rhizobium etli (strain ATCC 51251 / DSM 11541 / JCM 21823 / NBRC 15573 / CFN 42).